The following is a 574-amino-acid chain: ATP synthase subunit beta, mitochondrial (574 aa).

The transit peptide at 1–26 (MLSSVRLAALRAGKTNSVFQAVRAFA) directs the protein to the mitochondrion. Residue 183 to 190 (GGAGVGKT) participates in ATP binding.

Belongs to the ATPase alpha/beta chains family. F-type ATPases have 2 components, CF(1) - the catalytic core - and CF(0) - the membrane proton channel. CF(1) has five subunits: alpha(3), beta(3), gamma(1), delta(1), epsilon(1). CF(0) has three main subunits: a, b and c.

The protein resides in the mitochondrion. It is found in the mitochondrion inner membrane. It catalyses the reaction ATP + H2O + 4 H(+)(in) = ADP + phosphate + 5 H(+)(out). In terms of biological role, mitochondrial membrane ATP synthase (F(1)F(0) ATP synthase or Complex V) produces ATP from ADP in the presence of a proton gradient across the membrane which is generated by electron transport complexes of the respiratory chain. F-type ATPases consist of two structural domains, F(1) - containing the extramembraneous catalytic core, and F(0) - containing the membrane proton channel, linked together by a central stalk and a peripheral stalk. During catalysis, ATP synthesis in the catalytic domain of F(1) is coupled via a rotary mechanism of the central stalk subunits to proton translocation. Subunits alpha and beta form the catalytic core in F(1). Rotation of the central stalk against the surrounding alpha(3)beta(3) subunits leads to hydrolysis of ATP in three separate catalytic sites on the beta subunits. The chain is ATP synthase subunit beta, mitochondrial (ATP2) from Chlamydomonas reinhardtii (Chlamydomonas smithii).